Reading from the N-terminus, the 346-residue chain is tRNA N6-adenosine threonylcarbamoyltransferase (346 aa).

A divalent metal cation is bound by residues H120, H124, and Y141. Residues 141–145 (YVSGG), D173, G188, E192, and N277 contribute to the substrate site. Residue D305 coordinates a divalent metal cation.

It belongs to the KAE1 / TsaD family. In terms of assembly, component of the EKC/KEOPS complex composed of at least BUD32, CGI121, GON7, KAE1 and PCC1; the whole complex dimerizes. A divalent metal cation is required as a cofactor.

It is found in the cytoplasm. The protein localises to the nucleus. The catalysed reaction is L-threonylcarbamoyladenylate + adenosine(37) in tRNA = N(6)-L-threonylcarbamoyladenosine(37) in tRNA + AMP + H(+). Functionally, component of the EKC/KEOPS complex that is required for the formation of a threonylcarbamoyl group on adenosine at position 37 (t(6)A37) in tRNAs that read codons beginning with adenine. The complex is probably involved in the transfer of the threonylcarbamoyl moiety of threonylcarbamoyl-AMP (TC-AMP) to the N6 group of A37. KAE1 likely plays a direct catalytic role in this reaction, but requires other protein(s) of the complex to fulfill this activity. The EKC/KEOPS complex also promotes both telomere uncapping and telomere elongation. The complex is required for efficient recruitment of transcriptional coactivators. This chain is tRNA N6-adenosine threonylcarbamoyltransferase, found in Gibberella zeae (strain ATCC MYA-4620 / CBS 123657 / FGSC 9075 / NRRL 31084 / PH-1) (Wheat head blight fungus).